The following is a 95-amino-acid chain: Aspartyl/glutamyl-tRNA(Asn/Gln) amidotransferase subunit C (95 aa).

The protein belongs to the GatC family. In terms of assembly, heterotrimer of A, B and C subunits.

The catalysed reaction is L-glutamyl-tRNA(Gln) + L-glutamine + ATP + H2O = L-glutaminyl-tRNA(Gln) + L-glutamate + ADP + phosphate + H(+). It catalyses the reaction L-aspartyl-tRNA(Asn) + L-glutamine + ATP + H2O = L-asparaginyl-tRNA(Asn) + L-glutamate + ADP + phosphate + 2 H(+). In terms of biological role, allows the formation of correctly charged Asn-tRNA(Asn) or Gln-tRNA(Gln) through the transamidation of misacylated Asp-tRNA(Asn) or Glu-tRNA(Gln) in organisms which lack either or both of asparaginyl-tRNA or glutaminyl-tRNA synthetases. The reaction takes place in the presence of glutamine and ATP through an activated phospho-Asp-tRNA(Asn) or phospho-Glu-tRNA(Gln). The chain is Aspartyl/glutamyl-tRNA(Asn/Gln) amidotransferase subunit C from Desulforapulum autotrophicum (strain ATCC 43914 / DSM 3382 / VKM B-1955 / HRM2) (Desulfobacterium autotrophicum).